The primary structure comprises 615 residues: Nuclear receptor subfamily 1 group D member 1 (615 aa).

Over residues 1-12 (MTTLDSNNNTGG) the composition is skewed to polar residues. Residues 1–70 (MTTLDSNNNT…TQDPARSFGS (70 aa)) form a required for phosphorylation by CSNK1E and cytoplasmic localization region. The tract at residues 1–120 (MTTLDSNNNT…SSRVSPSKGT (120 aa)) is disordered. Residues 1–129 (MTTLDSNNNT…TSNITKLNGM (129 aa)) are modulating. A compositionally biased stretch (low complexity) spans 14-34 (ITYIGSSGSSPSRTSPESLYS). Over residues 35–48 (DSSNGSFQSLTQGC) the composition is skewed to polar residues. A crucial for activation of GJA1 region spans residues 49–285 (PTYFPPSPTG…PPRSPSPEPT (237 aa)). Phosphoserine; by GSK3-beta is present on residues Ser-55 and Ser-59. The segment covering 70–94 (SAPPSLSDDSSPSSASSSSSSSSSS) has biased composition (low complexity). Residues 130 to 206 (VLLCKVCGDV…VGMSRDAVRF (77 aa)) constitute a DNA-binding region (nuclear receptor). 2 NR C4-type zinc fingers span residues 133–153 (CKVCGDVASGFHYGVHACEGC) and 170–194 (CLKNENCSIVRINRNRCQQCRFKKC). N6-acetyllysine; by KAT5 occurs at positions 192 and 193. Disordered regions lie at residues 235-286 (LCPL…EPTM) and 312-337 (PGNFNANHASGSPSATTPHRWESQGC). The span at 240 to 252 (TSPTPHPTSGSMG) shows a compositional bias: low complexity. Pro residues predominate over residues 253–262 (PSPPPAPAPT). Thr-275 is modified (phosphothreonine; by CDK1). One can recognise an NR LBD domain in the interval 285–615 (TMEDVISQVA…KLLSFRVDAQ (331 aa)). A compositionally biased stretch (polar residues) spans 312-328 (PGNFNANHASGSPSATT). Cys-419 contacts heme. Lys-592 carries the N6-acetyllysine modification. His-603 contacts heme.

It belongs to the nuclear hormone receptor family. NR1 subfamily. In terms of assembly, binds DNA as a monomer or a homodimer. Interacts with NR2E3 and ZNHIT1. Interacts with C1D. Interacts with SP1. Interacts with OPHN1 (via C-terminus). Interacts with PER2; the interaction associates PER2 to BMAL1 promoter region. Interacts with CRY1. Interacts with CCAR2. Interacts with SIAH2. Interacts with FBXW7 and CDK1. Interacts with HUWE1. Interacts with NR0B2. Interacts with NFIL3. Interacts (via domain NR LBD) with HSP90AA1 and HSP90AB1. In terms of processing, ubiquitinated, leading to its proteasomal degradation. Ubiquitinated by the SCF(FBXW7) complex when phosphorylated by CDK1 leading to its proteasomal degradation. Ubiquitinated by SIAH2; leading to its proteasomal degradation. Rapidly ubiquitinated in response to inflammatory triggers and sumoylation is a prerequisite to its ubiquitination. Sumoylated by UBE2I, desumoylated by SENP1, and sumoylation is a prerequisite to its ubiquitination. Post-translationally, phosphorylated by CSNK1E; phosphorylation enhances its cytoplasmic localization. In terms of processing, undergoes lysosome-mediated degradation in a time-dependent manner in the liver. In terms of tissue distribution, expressed during adipocyte differentiation (at protein level). Expressed in skeletal muscle, bladder, lumbar spinal cord, pancreatic islets and hypothalamus. Expressed in developing and adult retina. In the adult retina, predominantly expressed in the outer nuclear layer, where rod and cone cells reside, and also localized to the ganglion cell layer. Expressed in a circadian manner in the liver. Expressed in a circadian manner in the lung with a peak between ZT8 and ZT12.

It localises to the nucleus. The protein localises to the cytoplasm. The protein resides in the cell projection. It is found in the dendrite. Its subcellular location is the dendritic spine. Its function is as follows. Transcriptional repressor which coordinates circadian rhythm and metabolic pathways in a heme-dependent manner. Integral component of the complex transcription machinery that governs circadian rhythmicity and forms a critical negative limb of the circadian clock by directly repressing the expression of core clock components BMAL1, CLOCK and CRY1. Also regulates genes involved in metabolic functions, including lipid and bile acid metabolism, adipogenesis, gluconeogenesis and the macrophage inflammatory response. Acts as a receptor for heme which stimulates its interaction with the NCOR1/HDAC3 corepressor complex, enhancing transcriptional repression. Recognizes two classes of DNA response elements within the promoter of its target genes and can bind to DNA as either monomers or homodimers, depending on the nature of the response element. Binds as a monomer to a response element composed of the consensus half-site motif 5'-[A/G]GGTCA-3' preceded by an A/T-rich 5' sequence (RevRE), or as a homodimer to a direct repeat of the core motif spaced by two nucleotides (RevDR-2). Acts as a potent competitive repressor of ROR alpha (RORA) function and regulates the levels of its ligand heme by repressing the expression of PPARGC1A, a potent inducer of heme synthesis. Regulates lipid metabolism by repressing the expression of APOC3 and by influencing the activity of sterol response element binding proteins (SREBPs); represses INSIG2 which interferes with the proteolytic activation of SREBPs which in turn govern the rhythmic expression of enzymes with key functions in sterol and fatty acid synthesis. Regulates gluconeogenesis via repression of G6PC1 and PEPCK and adipocyte differentiation via repression of PPARG. Regulates glucagon release in pancreatic alpha-cells via the AMPK-NAMPT-SIRT1 pathway and the proliferation, glucose-induced insulin secretion and expression of key lipogenic genes in pancreatic-beta cells. Positively regulates bile acid synthesis by increasing hepatic expression of CYP7A1 via repression of NR0B2 and NFIL3 which are negative regulators of CYP7A1. Modulates skeletal muscle oxidative capacity by regulating mitochondrial biogenesis and autophagy; controls mitochondrial biogenesis and respiration by interfering with the STK11-PRKAA1/2-SIRT1-PPARGC1A signaling pathway. Represses the expression of SERPINE1/PAI1, an important modulator of cardiovascular disease and the expression of inflammatory cytokines and chemokines in macrophages. Represses gene expression at a distance in macrophages by inhibiting the transcription of enhancer-derived RNAs (eRNAs). Plays a role in the circadian regulation of body temperature and negatively regulates thermogenic transcriptional programs in brown adipose tissue (BAT); imposes a circadian oscillation in BAT activity, increasing body temperature when awake and depressing thermogenesis during sleep. In concert with NR2E3, regulates transcriptional networks critical for photoreceptor development and function. In addition to its activity as a repressor, can also act as a transcriptional activator. In the ovarian granulosa cells acts as a transcriptional activator of STAR which plays a role in steroid biosynthesis. In collaboration with SP1, activates GJA1 transcription in a heme-independent manner. Represses the transcription of CYP2B10, CYP4A10 and CYP4A14. Represses the transcription of CES2. Represses and regulates the circadian expression of TSHB in a NCOR1-dependent manner. Negatively regulates the protein stability of NR3C1 and influences the time-dependent subcellular distribution of NR3C1, thereby affecting its transcriptional regulatory activity. Plays a critical role in the circadian control of neutrophilic inflammation in the lung; under resting, non-stress conditions, acts as a rhythmic repressor to limit inflammatory activity whereas in the presence of inflammatory triggers undergoes ubiquitin-mediated degradation thereby relieving inhibition of the inflammatory response. Plays a key role in the circadian regulation of microglial activation and neuroinflammation; suppresses microglial activation through the NF-kappaB pathway in the central nervous system. Plays a role in the regulation of the diurnal rhythms of lipid and protein metabolism in the skeletal muscle via transcriptional repression of genes controlling lipid and amino acid metabolism in the muscle. The protein is Nuclear receptor subfamily 1 group D member 1 (Nr1d1) of Mus musculus (Mouse).